Here is a 353-residue protein sequence, read N- to C-terminus: Cytochrome bc1 complex Rieske iron-sulfur subunit (353 aa).

The interval 1 to 51 (MSSQDIPEENLPAEQDRPHGAAARPADETNPFADPGLPPHEPRVQDVDERA) is disordered. Over residues 40 to 51 (HEPRVQDVDERA) the composition is skewed to basic and acidic residues. 3 consecutive transmembrane segments (helical) span residues 60-80 (ALLFTLSMLATIAFIAAFVAI), 99-119 (FALGMTLGVALFAIGAGAVHW), and 164-184 (LIRNTMLGALTLVPLSGVVLL). The Rieske domain occupies 246–336 (KAALMIIRLE…IGVNDEGYLE (91 aa)). Residues Cys279, His281, Cys298, and His301 each coordinate [2Fe-2S] cluster. Cys284 and Cys300 are joined by a disulfide.

Belongs to the Rieske iron-sulfur protein family. In terms of assembly, the cytochrome bc1 complex is composed of a cytochrome b (QcrB), the Rieske iron-sulfur protein (QcrA) and a diheme cytochrome c (QcrC) subunit. [2Fe-2S] cluster serves as cofactor.

It is found in the cell membrane. In terms of biological role, iron-sulfur subunit of the cytochrome bc1 complex, an essential component of the respiratory electron transport chain required for ATP synthesis. The bc1 complex catalyzes the oxidation of menaquinol and the reduction of cytochrome c in the respiratory chain. The bc1 complex operates through a Q-cycle mechanism that couples electron transfer to generation of the proton gradient that drives ATP synthesis. The sequence is that of Cytochrome bc1 complex Rieske iron-sulfur subunit (qcrA) from Streptomyces coelicolor (strain ATCC BAA-471 / A3(2) / M145).